We begin with the raw amino-acid sequence, 403 residues long: MTIPISEQIEIIKRGCSELLLEDELEQKLAQNRPLRIKAGFDPTAPDLHLGHTVLLNKMRHLQDLGHHALFLIGDFTGMIGDPSGKNTTRPPLSREQVAENAKSYQDQVFRILKPEQTEVVFNSAWMDRLNAADLIKLAATHTVARMLERDDFGKRYQSNKPIAIHEFLYPLIQGYDSVALRADIELGGTDQKFNLLMGRELQKHFGQASQCVITMPLLEGLDGVNKMSKSAGNYIGITESPGNMFGKLMSISDELMWRYIELLSFEPLRVVRQWQQDVGNGRNPRDIKVLFAQEIVTRFHSRQDAEAALADFESRFRRGGIPDDLPENILQAGKEGLPIAQLLKQTGLTASTTEALRMIEQGGVKLNGEKVSDKTFRLSCGQMVIVQVGKRKFARVTICEEK.

A 'HIGH' region motif is present at residues 43 to 52 (PTAPDLHLGH). A 'KMSKS' region motif is present at residues 227 to 231 (KMSKS). K230 contacts ATP. Positions 338-399 (LPIAQLLKQT…GKRKFARVTI (62 aa)) constitute an S4 RNA-binding domain.

Belongs to the class-I aminoacyl-tRNA synthetase family. TyrS type 2 subfamily. As to quaternary structure, homodimer.

It is found in the cytoplasm. The catalysed reaction is tRNA(Tyr) + L-tyrosine + ATP = L-tyrosyl-tRNA(Tyr) + AMP + diphosphate + H(+). In terms of biological role, catalyzes the attachment of tyrosine to tRNA(Tyr) in a two-step reaction: tyrosine is first activated by ATP to form Tyr-AMP and then transferred to the acceptor end of tRNA(Tyr). This chain is Tyrosine--tRNA ligase, found in Nitrosospira multiformis (strain ATCC 25196 / NCIMB 11849 / C 71).